The sequence spans 76 residues: UPF0346 protein LBUL_1194 (76 aa).

Belongs to the UPF0346 family.

The chain is UPF0346 protein LBUL_1194 from Lactobacillus delbrueckii subsp. bulgaricus (strain ATCC BAA-365 / Lb-18).